We begin with the raw amino-acid sequence, 275 residues long: Transcription regulator AOL_s00215g275 (275 aa).

2 disordered regions span residues 13-65 (TPLP…SSIG) and 84-108 (ILQQKSRHQNQPSRRHKQKNRRQRL). Residues 14-26 (PLPSLNSSRSPQR) show a composition bias toward polar residues. Low complexity predominate over residues 27–40 (TPSLGSSSTSSLSP). The segment covering 47 to 60 (TPSTPESNDSGLTL) has biased composition (polar residues). Over residues 88-106 (KSRHQNQPSRRHKQKNRRQ) the composition is skewed to basic residues.

Its function is as follows. Regulatory protein; part of the gene cluster that mediates the biosynthesis of sesquiterpenyl epoxy-cyclohexenoids (SECs) such as anthrobotrisins and arthrosporols, metabolites that possess a novel hybrid carbon skeleton consisting of a polyketide-derived epoxycyclohexenol combined with a terpenoid-derived monocyclic sesquiterpenol substructure (PKS-PTS hybrid). The SEC pathway plays an important role for fungal soil colonization via decreasing fungal nematode-capturing ability. AOL_s00215g275 can perform multiple functions in fungal growth and development via regulating the SEC biosynthesis, TCA cycle, and septa formation. Also involved in inhibiting conidial formation, germination, and nematicidal activity but promotes trap production. Plays a role in fungal resistances and significantly regulates the fungal morphology and responses to chemical stressors such as cell-wall-perturbing agents (SDS and Congo red), osmotic agents (NaCl and sorbitol), or the oxidant H(2)O(2). The polypeptide is Transcription regulator AOL_s00215g275 (Arthrobotrys oligospora (strain ATCC 24927 / CBS 115.81 / DSM 1491) (Nematode-trapping fungus)).